A 371-amino-acid chain; its full sequence is Gustatory receptor-like 65a (371 aa).

The Cytoplasmic segment spans residues 1–13 (MREVNLLNRFTRQ). A helical membrane pass occupies residues 14-34 (FLFLIVLVTQICGVATFVYNS). Residues 35 to 42 (KAQCFRQS) are Extracellular-facing. A helical transmembrane segment spans residues 43–63 (GFLRFYSSLVLIFLALFLIVT). The Cytoplasmic portion of the chain corresponds to 64-72 (TSKMFHNLQ). The chain crosses the membrane as a helical span at residues 73-93 (AVWPYVVGSVIILVVRIHGLL). The Extracellular portion of the chain corresponds to 94 to 126 (ESAEIVELLNQMLRIMRQVNLMARHPNLFRLKH). The chain crosses the membrane as a helical span at residues 127-147 (LLLLLLALQNLLRSLNTIVGI). Residues 148-161 (SNHSAEAYDSFLNS) are Cytoplasmic-facing. The chain crosses the membrane as a helical span at residues 162–182 (VILLIILAVLLSFLLQITINI). Topologically, residues 183–251 (CLFVVLIATY…FHITVRIIRH (69 aa)) are extracellular. Residues 252-272 (FRFHWLCAIIYGLLPFFSLTA) form a helical membrane-spanning segment. The Cytoplasmic portion of the chain corresponds to 273 to 277 (KDQNG). The chain crosses the membrane as a helical span at residues 278–298 (FNFLIISALNIIFQWTIFAIL). Topologically, residues 299 to 371 (SRESRITRSL…FVNRLEYLHI (73 aa)) are extracellular.

Its subcellular location is the cell membrane. This chain is Gustatory receptor-like 65a, found in Drosophila melanogaster (Fruit fly).